The chain runs to 598 residues: EF-hand and coiled-coil domain-containing protein 1 (598 aa).

The tract at residues 1–22 (MEPVSTGAEAGMEGAGGDPYRR) is disordered. The 36-residue stretch at 54 to 89 (GLDQYLQEVFHHLDCRGAGRLPRADFRALCAVLGLR) folds into the EF-hand domain. 3 disordered regions span residues 96–127 (AGQA…DTDE), 175–198 (RLRR…PDCE), and 326–411 (YRSE…KKTP). The segment covering 175–185 (RLRRPRRRRRP) has biased composition (basic residues). A coiled-coil region spans residues 196–303 (DCERVARLEE…RSLHRVRELE (108 aa)). Over residues 343 to 359 (PGDKSNEPEDAGTRDPD) the composition is skewed to basic and acidic residues. Positions 394–404 (SDEEEVEEERW) are enriched in acidic residues. Residues 479–533 (TSEEEAELQQKVEENEHLRLELQMVETERVRLSLLEEKLVDVLQLLQRLRDLNIS) are a coiled coil.

This Homo sapiens (Human) protein is EF-hand and coiled-coil domain-containing protein 1 (EFCC1).